Reading from the N-terminus, the 370-residue chain is 4-hydroxy-3-methylbut-2-en-1-yl diphosphate synthase (flavodoxin) (370 aa).

Cys-270, Cys-273, Cys-305, and Glu-312 together coordinate [4Fe-4S] cluster.

The protein belongs to the IspG family. It depends on [4Fe-4S] cluster as a cofactor.

It catalyses the reaction (2E)-4-hydroxy-3-methylbut-2-enyl diphosphate + oxidized [flavodoxin] + H2O + 2 H(+) = 2-C-methyl-D-erythritol 2,4-cyclic diphosphate + reduced [flavodoxin]. Its pathway is isoprenoid biosynthesis; isopentenyl diphosphate biosynthesis via DXP pathway; isopentenyl diphosphate from 1-deoxy-D-xylulose 5-phosphate: step 5/6. Converts 2C-methyl-D-erythritol 2,4-cyclodiphosphate (ME-2,4cPP) into 1-hydroxy-2-methyl-2-(E)-butenyl 4-diphosphate. The polypeptide is 4-hydroxy-3-methylbut-2-en-1-yl diphosphate synthase (flavodoxin) (Marinomonas sp. (strain MWYL1)).